A 415-amino-acid polypeptide reads, in one-letter code: Phakinin (415 aa).

The tract at residues 1–26 (MSTRRVVVDAPAGASSSMPLQRHKAS) is disordered. S2 is subject to N-acetylserine. The interval 2 to 114 (STRRVVVDAP…LGAVEDLGGC (113 aa)) is head. Residues S26, S32, and S35 each carry the phosphoserine modification. T53 is subject to Phosphothreonine. S90 and S100 each carry phosphoserine. The IF rod domain occupies 104 to 415 (DLGAVEDLGG…HALLDREESS (312 aa)). Coiled-coil stretches lie at residues 115 to 144 (LVEY…ESKA), 199 to 248 (RKAA…VKML), and 295 to 395 (QAKQ…LSHK). Residues 396 to 415 (CQLQRDVASYHALLDREESS) are tail.

This sequence belongs to the intermediate filament family. As to quaternary structure, part of a complex required for lens intermediate filament formation composed of BFSP1, BFSP2 and CRYAA. Found in a complex composed of PPL (via C-terminal linker domain), BFSP1 and BFSP2 in the retinal lens. Within the complex interacts with PPL (via C-terminal linker domain) and with BFSP1. Identified in a complex that contains VIM, EZR, AHNAK, BFSP1, BFSP2, ANK2, PLEC, PRX and spectrin. Interacts with LGSN. Interacts with VIM. As to expression, abundantly expressed in both the inner and outer cortex of the retina, expressed at a lower level in the nucleus of the retina (at protein level). Detected in eye lens fiber cells (at protein level).

It localises to the cell membrane. Its subcellular location is the cytoplasm. The protein localises to the cytoskeleton. The protein resides in the cell cortex. Required for the correct formation of lens intermediate filaments as part of a complex composed of BFSP1, BFSP2 and CRYAA. Plays a role in maintenance of retinal lens optical clarity. The polypeptide is Phakinin (BFSP2) (Bos taurus (Bovine)).